A 141-amino-acid chain; its full sequence is Large ribosomal subunit protein uL11 (141 aa).

Belongs to the universal ribosomal protein uL11 family. Part of the ribosomal stalk of the 50S ribosomal subunit. Interacts with L10 and the large rRNA to form the base of the stalk. L10 forms an elongated spine to which L12 dimers bind in a sequential fashion forming a multimeric L10(L12)X complex. One or more lysine residues are methylated.

Forms part of the ribosomal stalk which helps the ribosome interact with GTP-bound translation factors. The polypeptide is Large ribosomal subunit protein uL11 (Ruegeria pomeroyi (strain ATCC 700808 / DSM 15171 / DSS-3) (Silicibacter pomeroyi)).